The chain runs to 348 residues: Growth-regulating factor 5 (348 aa).

A QLQ domain is found at V24–P59. Short sequence motifs (bipartite nuclear localization signal) lie at residues K94–R112 and R130–K137. The WRC domain maps to D97–S141. Disordered regions lie at residues E125 to D165 and L306 to D348. Positions H127–R136 are enriched in basic residues. A compositionally biased stretch (polar residues) spans P148–T161. Basic and acidic residues predominate over residues L306–W320. The segment covering N329–I340 has biased composition (polar residues).

Belongs to the GRF family.

The protein localises to the nucleus. Its function is as follows. Transcription activator that plays a regulatory role in gibberellin-induced stem elongation. This is Growth-regulating factor 5 (GRF5) from Oryza sativa subsp. japonica (Rice).